The chain runs to 909 residues: Cutinase transcription factor 1 alpha (909 aa).

A disordered region spans residues 1-51 (MSSGDAPPQAQPQPHQQEQPNQRQSSTPAPSAAPVPPAPSTSTSNSAGGVS). Over residues 12–30 (PQPHQQEQPNQRQSSTPAP) the composition is skewed to low complexity. Residues 61–90 (CETCHARKVRCDAASLGVPCTNCVAFQIEC) constitute a DNA-binding region (zn(2)-C6 fungal-type). Disordered stretches follow at residues 95 to 159 (PKRK…EAQA), 651 to 757 (AEGK…SFSV), and 841 to 878 (LPQG…QGQA). The segment covering 110–119 (KDSDSDRGDG) has biased composition (basic and acidic residues). The span at 142 to 156 (VFHSHNGTPPTTLTE) shows a compositional bias: polar residues. A compositionally biased stretch (basic and acidic residues) spans 669-683 (QHSRQQEAPKRKYDE). Composition is skewed to polar residues over residues 704-717 (PQTP…TSSM), 737-755 (GGTN…NPSF), and 865-878 (SPDS…QGQA).

It is found in the nucleus. The sequence is that of Cutinase transcription factor 1 alpha (CTF1-ALPHA) from Fusarium vanettenii (Neocosmospora pisi).